A 493-amino-acid polypeptide reads, in one-letter code: Ribulose bisphosphate carboxylase large chain (493 aa).

Residues N132 and T182 each coordinate substrate. The active-site Proton acceptor is the K184. K186 provides a ligand contact to substrate. Residues K210, D212, and E213 each contribute to the Mg(2+) site. K210 carries the post-translational modification N6-carboxylysine. The active-site Proton acceptor is H302. Positions 303, 335, and 387 each coordinate substrate.

This sequence belongs to the RuBisCO large chain family. Type I subfamily. As to quaternary structure, heterohexadecamer of 8 large chains and 8 small chains. Mg(2+) is required as a cofactor.

The catalysed reaction is 2 (2R)-3-phosphoglycerate + 2 H(+) = D-ribulose 1,5-bisphosphate + CO2 + H2O. It carries out the reaction D-ribulose 1,5-bisphosphate + O2 = 2-phosphoglycolate + (2R)-3-phosphoglycerate + 2 H(+). In terms of biological role, ruBisCO catalyzes two reactions: the carboxylation of D-ribulose 1,5-bisphosphate, the primary event in carbon dioxide fixation, as well as the oxidative fragmentation of the pentose substrate. Both reactions occur simultaneously and in competition at the same active site. This Acidiphilium cryptum (strain JF-5) protein is Ribulose bisphosphate carboxylase large chain.